A 662-amino-acid chain; its full sequence is DNA ligase (662 aa).

NAD(+) contacts are provided by residues 34–38 (DYEYD), 83–84 (SI), and Glu-113. The active-site N6-AMP-lysine intermediate is the Lys-115. Arg-136, Glu-172, Lys-286, and Lys-310 together coordinate NAD(+). The Zn(2+) site is built by Cys-404, Cys-407, Cys-422, and Cys-427. The 80-residue stretch at 583-662 (KSGSTCFGKA…EAFTNLIHLE (80 aa)) folds into the BRCT domain.

The protein belongs to the NAD-dependent DNA ligase family. LigA subfamily. Mg(2+) serves as cofactor. Requires Mn(2+) as cofactor.

The catalysed reaction is NAD(+) + (deoxyribonucleotide)n-3'-hydroxyl + 5'-phospho-(deoxyribonucleotide)m = (deoxyribonucleotide)n+m + AMP + beta-nicotinamide D-nucleotide.. DNA ligase that catalyzes the formation of phosphodiester linkages between 5'-phosphoryl and 3'-hydroxyl groups in double-stranded DNA using NAD as a coenzyme and as the energy source for the reaction. It is essential for DNA replication and repair of damaged DNA. The chain is DNA ligase from Chlamydia pneumoniae (Chlamydophila pneumoniae).